Reading from the N-terminus, the 504-residue chain is Protoporphyrinogen oxidase, mitochondrial (504 aa).

FAD contacts are provided by residues 20–25 (GAGVSG), 43–44 (EA), Lys-51, and 65–68 (GANT). A disordered region spans residues 213 to 232 (SPKNEKKQGPPKTSANKKRQ). Residues Val-264 and 473 to 475 (LSV) contribute to the FAD site.

Belongs to the protoporphyrinogen/coproporphyrinogen oxidase family. Protoporphyrinogen oxidase subfamily. FAD is required as a cofactor.

It localises to the mitochondrion. The enzyme catalyses protoporphyrinogen IX + 3 O2 = protoporphyrin IX + 3 H2O2. It participates in porphyrin-containing compound metabolism; protoporphyrin-IX biosynthesis; protoporphyrin-IX from protoporphyrinogen-IX: step 1/1. With respect to regulation, inhibited by the herbicide acifluorfen. In terms of biological role, catalyzes the 6-electron oxidation of protoporphyrinogen-IX to form protoporphyrin-IX. Provides precursor for the mitochondrial and plastidic heme synthesis and the predominant chlorophyll synthesis in plastids. In Nicotiana tabacum (Common tobacco), this protein is Protoporphyrinogen oxidase, mitochondrial (PPXII).